The sequence spans 548 residues: Internalin H (548 aa).

A signal peptide spans 1–30; the sequence is MKKRWNSVFKLVLMVTAILGLSLYVTTSQG. LRR repeat units follow at residues 93-105, 113-127, 135-149, 157-171, 179-193, 201-215, and 223-236; these read GVQY…GLEL, LTPL…ELEL, VSAI…TLDL, VTPL…VLYL, ISPL…YLSI, LTPL…TLKA, and ISPL…IEVH. Positions 480 to 518 are disordered; that stretch reads FTKNDNPNPDDPTTNTPTGNGDGTSNPSNSGGNTTLPTA. Residues 483-498 are compositionally biased toward low complexity; it reads NDNPNPDDPTTNTPTG. Residues 504 to 516 are compositionally biased toward polar residues; that stretch reads SNPSNSGGNTTLP. The LPXTG sorting signal motif lies at 515–519; that stretch reads LPTAG. Position 518 is a pentaglycyl murein peptidoglycan amidated alanine (alanine 518). Positions 519–548 are cleaved as a propeptide — removed by sortase A; it reads GDENTMLPIFIGVFLLGTATLILRKTIKVK.

It belongs to the internalin family.

It localises to the secreted. Its subcellular location is the cell wall. Its function is as follows. Contributes to systemic listeriosis in mice by decreasing host IL-6 cytokine production and thus evasion of the host immune response. Does not contribute to invasion of the host intestinal tissue. The chain is Internalin H (inlH) from Listeria monocytogenes serovar 1/2a (strain ATCC BAA-679 / EGD-e).